A 1076-amino-acid polypeptide reads, in one-letter code: Enhancer of mRNA-decapping protein 4-like protein pdc1 (1076 aa).

2 stretches are compositionally biased toward low complexity: residues 1 to 19 (MNEQ…LPNL) and 53 to 69 (SSLL…SNQS). 3 disordered regions span residues 1–82 (MNEQ…ASHS), 95–127 (GAKP…FNPV), and 139–204 (STGP…AEEQ). The span at 70-82 (PSNSGPKYYASHS) shows a compositional bias: polar residues. The segment covering 153–173 (NDSQDTAFQSSRNMPSDTSVA) has biased composition (polar residues). Low complexity predominate over residues 174–184 (SPDYSHSQSSS). Residues 185 to 195 (PIANYQESGNS) are compositionally biased toward polar residues. WD repeat units follow at residues 292–334 (NSPN…STSE) and 402–441 (DTGI…PSTP). Disordered stretches follow at residues 666 to 714 (RHST…SPSS) and 892 to 934 (TAPD…PAQG). Residues 669 to 688 (TASPSTVNSGFSTPRSQATG) are compositionally biased toward polar residues. Phosphoserine is present on residues serine 671 and serine 673. Threonine 674 carries the phosphothreonine modification. Residues 695 to 706 (DKGERFETKDKS) are compositionally biased toward basic and acidic residues. The interaction with dcp2 stretch occupies residues 789 to 1076 (MQVALKEEIA…ISEISVASSN (288 aa)). Serine 1075 bears the Phosphoserine mark.

Belongs to the WD repeat EDC4 family. In terms of assembly, interacts with dcp2; via C-terminus.

It localises to the cytoplasm. Its subcellular location is the P-body. Functionally, involved in P-body formation. Acts as a functional homolog of human EDC4, which plays a role in mRNA decapping in the process of mRNA degradation. Enhances the decapping activity of dcp2. Together with edc3, acts as a scaffolding protein sufficient for the phase transition of the components of the 5' to 3' mRNA degradation machinery to form P-bodies. Intermolecular interactions between the edc3 Sm domain and at least 10 helical leucine-rich motifs in dcp2 and pdc1 build the core of the interaction network of this spontaneous clustering process. This chain is Enhancer of mRNA-decapping protein 4-like protein pdc1, found in Schizosaccharomyces pombe (strain 972 / ATCC 24843) (Fission yeast).